The sequence spans 66 residues: uncharacterized protein (66 aa).

2 helical membrane-spanning segments follow: residues 5 to 25 (ALIV…PLVN) and 30 to 50 (IMFG…VTPL).

The protein resides in the cell membrane. This is an uncharacterized protein from Bacillus subtilis (strain 168).